Here is a 200-residue protein sequence, read N- to C-terminus: NAD(P)H dehydrogenase (quinone) (200 aa).

In terms of domain architecture, Flavodoxin-like spans 4-191; it reads VLVLYYSMYG…DIARFQGKHV (188 aa). FMN contacts are provided by residues 10-15 and 79-81; these read SMYGHI and TRF. Y12 serves as a coordination point for NAD(+). W99 lines the substrate pocket. Residues 114-120 and H135 contribute to the FMN site; that span reads STGTQHG.

This sequence belongs to the WrbA family. Requires FMN as cofactor.

It catalyses the reaction a quinone + NADH + H(+) = a quinol + NAD(+). It carries out the reaction a quinone + NADPH + H(+) = a quinol + NADP(+). The chain is NAD(P)H dehydrogenase (quinone) from Paraburkholderia phytofirmans (strain DSM 17436 / LMG 22146 / PsJN) (Burkholderia phytofirmans).